Reading from the N-terminus, the 175-residue chain is Putative carbonic anhydrase-like protein YbcF (175 aa).

It belongs to the beta-class carbonic anhydrase family.

In Bacillus subtilis (strain 168), this protein is Putative carbonic anhydrase-like protein YbcF (ybcF).